The chain runs to 305 residues: Hepatitis A virus cellular receptor 1 homolog (305 aa).

Positions 1–21 (MNQIQVFISGLILLLPGAVDS) are cleaved as a signal peptide. The 101-residue stretch at 22-122 (YVEVKGVVGH…PGWFNDQKVT (101 aa)) folds into the Ig-like V-type domain. Residues 22 to 237 (YVEVKGVVGH…GKPQKNPTKG (216 aa)) are Extracellular-facing. Disulfide bonds link Cys-37/Cys-108, Cys-49/Cys-60, and Cys-55/Cys-107. Residues 129 to 185 (PEIPTRPPTRPTTTRPTATGRPTTISTRSTHVPTSIRVSTSTPPTSTHTWTHKPEPT) are disordered. Low complexity-rich tracts occupy residues 139–152 (PTTT…RPTT) and 161–177 (PTSI…STHT). N-linked (GlcNAc...) asparagine glycosylation occurs at Asn-208. The chain crosses the membrane as a helical span at residues 238–258 (FYVGICIAALLLLLLVSTVAI). The Cytoplasmic portion of the chain corresponds to 259 to 305 (TRYILMKRKSASLSVVAFRVSKIEALQNAAVVHSRAEDNIYIVEDRP).

It belongs to the immunoglobulin superfamily. TIM family. Interacts with STAM. Interacts with SELPLG. In terms of tissue distribution, expressed by stimulated T-cells. Expressed during primary antigen stimulation. Expressed at higher levels on B rather than T-cells, both constitutively and after activation.

Its subcellular location is the cell membrane. Phosphatidylserine receptor that plays an important functional role in regulatory B-cells homeostasis including generation, expansion and suppressor functions. As P-selectin/SELPLG ligand, plays a specialized role in activated but not naive T-cell trafficking during inflammatory responses. Controls thereby T-cell accumulation in the inflamed central nervous system (CNS) and the induction of autoimmune disease. Also regulates expression of various anti-inflammatory cytokines and co-inhibitory ligands including IL10. Acts as a regulator of T-cell proliferation. May play a role in kidney injury and repair. This chain is Hepatitis A virus cellular receptor 1 homolog (Havcr1), found in Mus musculus (Mouse).